The primary structure comprises 55 residues: Large ribosomal subunit protein bL33 (55 aa).

Belongs to the bacterial ribosomal protein bL33 family.

This Maricaulis maris (strain MCS10) (Caulobacter maris) protein is Large ribosomal subunit protein bL33.